Reading from the N-terminus, the 215-residue chain is Large ribosomal subunit protein bL25 (215 aa).

A disordered region spans residues 174-215 (ETVVTVQPPATEKEEETEAAVTDSEPEVINEKEEPAEEAKEE). The span at 186 to 215 (KEEETEAAVTDSEPEVINEKEEPAEEAKEE) shows a compositional bias: acidic residues.

The protein belongs to the bacterial ribosomal protein bL25 family. CTC subfamily. Part of the 50S ribosomal subunit; part of the 5S rRNA/L5/L18/L25 subcomplex. Contacts the 5S rRNA. Binds to the 5S rRNA independently of L5 and L18.

Its function is as follows. This is one of the proteins that binds to the 5S RNA in the ribosome where it forms part of the central protuberance. This chain is Large ribosomal subunit protein bL25, found in Halalkalibacterium halodurans (strain ATCC BAA-125 / DSM 18197 / FERM 7344 / JCM 9153 / C-125) (Bacillus halodurans).